A 134-amino-acid polypeptide reads, in one-letter code: Lymphocyte antigen 6F (134 aa).

The first 26 residues, 1 to 26, serve as a signal peptide directing secretion; that stretch reads MDSCHTTKSCVLILLVVLLCAERAQG. The region spanning 27–119 is the UPAR/Ly6 domain; sequence LECYNCLGVS…TGGSTWTMTR (93 aa). 5 disulfides stabilise this stretch: Cys-29/Cys-53, Cys-32/Cys-41, Cys-46/Cys-74, Cys-78/Cys-98, and Cys-99/Cys-104. The GPI-anchor amidated glycine moiety is linked to residue Gly-112. A propeptide spans 113–134 (removed in mature form); that stretch reads STWTMTRVLLLNLGSVFLQTLL.

The protein localises to the cell membrane. The chain is Lymphocyte antigen 6F (Ly6f) from Mus musculus (Mouse).